The chain runs to 365 residues: 2-aminoethylphosphonate--pyruvate transaminase (365 aa).

Lys-194 carries the N6-(pyridoxal phosphate)lysine modification.

The protein belongs to the class-V pyridoxal-phosphate-dependent aminotransferase family. PhnW subfamily. Homodimer. Pyridoxal 5'-phosphate serves as cofactor.

The enzyme catalyses (2-aminoethyl)phosphonate + pyruvate = phosphonoacetaldehyde + L-alanine. Its function is as follows. Involved in phosphonate degradation. This is 2-aminoethylphosphonate--pyruvate transaminase from Bacillus cereus (strain AH187).